Here is a 90-residue protein sequence, read N- to C-terminus: Small ribosomal subunit protein uS15 (90 aa).

The protein belongs to the universal ribosomal protein uS15 family. In terms of assembly, part of the 30S ribosomal subunit. Forms a bridge to the 50S subunit in the 70S ribosome, contacting the 23S rRNA.

Functionally, one of the primary rRNA binding proteins, it binds directly to 16S rRNA where it helps nucleate assembly of the platform of the 30S subunit by binding and bridging several RNA helices of the 16S rRNA. In terms of biological role, forms an intersubunit bridge (bridge B4) with the 23S rRNA of the 50S subunit in the ribosome. This chain is Small ribosomal subunit protein uS15, found in Wolbachia pipientis subsp. Culex pipiens (strain wPip).